Reading from the N-terminus, the 1273-residue chain is Paired amphipathic helix protein Sin3a (1273 aa).

Disordered regions lie at residues 1–23 (MKRR…IPGS) and 87–110 (HPTA…PPVA). Ser10 is modified (phosphoserine). Residues 119–189 (QRLKVEDALS…MGFNTFLPPG (71 aa)) form the PAH 1 domain. Positions 119-196 (QRLKVEDALS…PPGYKIEVQT (78 aa)) are interaction with HCFC1. Residues Lys122 and Lys134 each participate in a glycyl lysine isopeptide (Lys-Gly) (interchain with G-Cter in SUMO2) cross-link. A disordered region spans residues 205–297 (PGQVHQIPTH…ISLGTAPSLQ (93 aa)). The interaction with REST stretch occupies residues 205–480 (PGQVHQIPTH…RKALRSAEAY (276 aa)). Low complexity predominate over residues 228 to 237 (SQPSAQSAPA). A compositionally biased stretch (pro residues) spans 238 to 248 (PAQPAPQPPPA). Over residues 252–266 (KPSQLQAHTPASQQT) the composition is skewed to polar residues. Residues 267 to 282 (PPLPPYASPRSPPVQP) are compositionally biased toward pro residues. Ser277 carries the post-translational modification Phosphoserine. Thr284 bears the Phosphothreonine mark. Residues 284-297 (TPVTISLGTAPSLQ) show a composition bias toward polar residues. The PAH 2 domain occupies 300 to 383 (QPVEFNHAIN…SEFGQFLPDA (84 aa)). Residues 398 to 446 (DSVRNDHGGTVKKPQLNNKPQRPSQNGCQIRRHPTGTTPPVKKKPKLLN) are disordered. A compositionally biased stretch (polar residues) spans 412 to 425 (QLNNKPQRPSQNGC). In terms of domain architecture, PAH 3 spans 456-525 (SKHGGGTESL…NWFKNFLGYK (70 aa)). Residues 458 to 525 (HGGGTESLFF…NWFKNFLGYK (68 aa)) form an interaction with SAP30 region. Lys469 is subject to N6-acetyllysine. Positions 523–850 (GYKESVHLET…EMDVDEATGA (328 aa)) are interaction with NCOR1. The interval 524-659 (YKESVHLETY…KFRLDNTLGG (136 aa)) is interaction with SUDS3 and SAP130. Lys563 participates in a covalent cross-link: Glycyl lysine isopeptide (Lys-Gly) (interchain with G-Cter in SUMO2). The interaction with HDAC1 and ARID4B stretch occupies residues 687–829 (NPSIAVPIVL…IPDLLFAQRG (143 aa)). A phosphoserine mark is found at Ser832 and Ser860. N6-acetyllysine occurs at positions 865 and 875. Positions 888 to 967 (VNNNWYIFMR…YYPAFLDMVR (80 aa)) are interaction with OGT. A coiled-coil region spans residues 903–932 (CLRLLRICSQAERQIEEENREREWEREVLG). Phosphoserine is present on residues Ser940, Ser1089, and Ser1112. Residues 1136-1156 (CQRGREQQEKEGKEGNSKKTM) form a disordered region. Basic and acidic residues predominate over residues 1138–1156 (RGREQQEKEGKEGNSKKTM).

Interacts with ARID4B, BRMS1L, HCFC1, HDAC1, HDAC2, MXI1, SAP30L, SAP130, SFPQ and TOPORS. Interacts with OGT (via TPRs 1-6); the interaction mediates transcriptional repression in parallel with histone deacetylase. Interacts with BAZ2A, MXD1, MXD3, MXD4, MBD2, DACH1, NCOR1, NR4A2, REST, RLIM, SAP30, SETDB1, SMYD2, and SUDS3. Interacts with PHF12 in a complex composed of HDAC1, PHF12 and SAP30. Interacts with TET1; the interaction recruits SIN3A to gene promoters. The large PER complex involved in the histone deacetylation is composed of at least HDAC1, PER2, SFPQ and SIN3A. Interacts with KLF11. Interacts with PPHLN1. Found in a complex with YY1, GON4L and HDAC1. Interacts (via PAH2) with FOXK1. Interacts with FOXK2. Found in a complex composed of at least SINHCAF, SIN3A, HDAC1, SAP30, RBBP4, OGT and TET1. Interacts with SINHCAF. Interacts with SPHK2. In terms of processing, SUMO1 sumoylated by TOPORS. Probably desumoylated by SENP2. In terms of tissue distribution, expressed in the developing brain, with highest levels of expression detected in the ventricular zone of various cortical regions.

The protein resides in the nucleus. It localises to the nucleolus. Its function is as follows. Acts as a transcriptional repressor. Corepressor for REST. Interacts with MXI1 to repress MYC responsive genes and antagonize MYC oncogenic activities. Also interacts with MXD1-MAX heterodimers to repress transcription by tethering SIN3A to DNA. Acts cooperatively with OGT to repress transcription in parallel with histone deacetylation. Involved in the control of the circadian rhythms. Required for the transcriptional repression of circadian target genes, such as PER1, mediated by the large PER complex through histone deacetylation. Cooperates with FOXK1 to regulate cell cycle progression probably by repressing cell cycle inhibitor genes expression. Required for cortical neuron differentiation and callosal axon elongation. In Homo sapiens (Human), this protein is Paired amphipathic helix protein Sin3a.